The primary structure comprises 148 residues: UPF0179 protein Mboo_1959 (148 aa).

This sequence belongs to the UPF0179 family.

This is UPF0179 protein Mboo_1959 from Methanoregula boonei (strain DSM 21154 / JCM 14090 / 6A8).